A 208-amino-acid chain; its full sequence is Ribosomal RNA small subunit methyltransferase G (208 aa).

S-adenosyl-L-methionine contacts are provided by residues Gly-73, Leu-78, 127–128, and Arg-141; that span reads VE.

Belongs to the methyltransferase superfamily. RNA methyltransferase RsmG family.

The protein resides in the cytoplasm. It carries out the reaction guanosine(527) in 16S rRNA + S-adenosyl-L-methionine = N(7)-methylguanosine(527) in 16S rRNA + S-adenosyl-L-homocysteine. In terms of biological role, specifically methylates the N7 position of guanine in position 527 of 16S rRNA. This chain is Ribosomal RNA small subunit methyltransferase G, found in Cereibacter sphaeroides (strain ATCC 17025 / ATH 2.4.3) (Rhodobacter sphaeroides).